We begin with the raw amino-acid sequence, 348 residues long: Terpene cyclase ctvD (348 aa).

A helical transmembrane segment spans residues 2 to 22 (ALSAYFLLCLSVLGLDAIYGF). N51 carries an N-linked (GlcNAc...) asparagine glycan. 7 helical membrane passes run 77–97 (PGLS…WVAI), 116–136 (LFAM…WCAI), 161–181 (LIPI…LLPE), 191–211 (QIAI…HWGL), 235–255 (FAFV…LTLI), 283–303 (GLWF…LWAM), and 323–343 (LKVG…WLLW).

The protein belongs to the membrane-bound ascI terpene cyclase family.

Its subcellular location is the membrane. The protein operates within mycotoxin biosynthesis. Its function is as follows. Hydrolase; part of the gene cluster that mediates the biosynthesis of citreoviridin, an inhibitor of the of F1-ATPase beta-subunit. The HR-PKS ctvA accepts acetyl-CoA as the starter unit and catalyzes eight iterations of malonyl-CoA extension and four iterations of SAM-dependent methylation at C4, C12, C14, and C16. The KR and DH domains selectively act on the first six iterations to generate the hexaene chain. In the last three iterations, the KR and DH domains terminate their functions to yield a beta,delta-diketo ester moiety, which then undergoes intramolecular cyclization to yield an alpha-pyrone intermediate. Subsequently, ctvB methylates the alpha-pyrone hydroxyl group to generate citreomontanin. In order to form the tetrahydrofuran ring with the correct stereochemistry, the terminal alkenes of citreomontanin need to undergo isomerization to yield a (17Z)-hexaene, a step that could be catalyzed by ctvC. The (17Z)-hexaene then undergoes bisepoxidation by ctvC to form a (17R,16R,15S,14R)-bisepoxide moiety. Lastly, ctvD acts as a regioselective hydrolase to form the tetrahydrofuran ring with the substituents in the correct absolute configuration, completing the biosynthesis of citreoviridin. The chain is Terpene cyclase ctvD from Aspergillus terreus (strain NIH 2624 / FGSC A1156).